We begin with the raw amino-acid sequence, 164 residues long: Probable Brix domain-containing ribosomal biogenesis protein (164 aa).

One can recognise a Brix domain in the interval 1 to 164 (MIITTSRKPS…IKTVKILDIE (164 aa)).

Probably involved in the biogenesis of the ribosome. The protein is Probable Brix domain-containing ribosomal biogenesis protein of Methanococcus maripaludis (strain DSM 14266 / JCM 13030 / NBRC 101832 / S2 / LL).